The chain runs to 82 residues: MVTIRLSRGGSKKRPFYQIVVADSRSPRDGRFIERVGFFNPLASGNVERVRINLDRVNHWIGHGASLSDRVASLVKEAQKAA.

Belongs to the bacterial ribosomal protein bS16 family.

This is Small ribosomal subunit protein bS16 from Histophilus somni (strain 2336) (Haemophilus somnus).